A 244-amino-acid chain; its full sequence is Orotidine 5'-phosphate decarboxylase (244 aa).

Substrate is bound by residues D12, K34, 61-70, T125, R187, Q196, G216, and R217; that span reads DLKLFDIPNT. The active-site Proton donor is K63.

The protein belongs to the OMP decarboxylase family. Type 1 subfamily. In terms of assembly, homodimer.

The enzyme catalyses orotidine 5'-phosphate + H(+) = UMP + CO2. Its pathway is pyrimidine metabolism; UMP biosynthesis via de novo pathway; UMP from orotate: step 2/2. In terms of biological role, catalyzes the decarboxylation of orotidine 5'-monophosphate (OMP) to uridine 5'-monophosphate (UMP). The chain is Orotidine 5'-phosphate decarboxylase from Dictyoglomus thermophilum (strain ATCC 35947 / DSM 3960 / H-6-12).